Reading from the N-terminus, the 417-residue chain is Queuine tRNA-ribosyltransferase accessory subunit 2 (417 aa).

Zn(2+) contacts are provided by Cys324, Cys326, Cys329, and His355.

Belongs to the queuine tRNA-ribosyltransferase family. QTRT2 subfamily. As to quaternary structure, heterodimer of a catalytic subunit and an accessory subunit. Zn(2+) is required as a cofactor.

The protein resides in the cytoplasm. Its function is as follows. Non-catalytic subunit of the queuine tRNA-ribosyltransferase (TGT) that catalyzes the base-exchange of a guanine (G) residue with queuine (Q) at position 34 (anticodon wobble position) in tRNAs with GU(N) anticodons (tRNA-Asp, -Asn, -His and -Tyr), resulting in the hypermodified nucleoside queuosine (7-(((4,5-cis-dihydroxy-2-cyclopenten-1-yl)amino)methyl)-7-deazaguanosine). In Drosophila virilis (Fruit fly), this protein is Queuine tRNA-ribosyltransferase accessory subunit 2.